Consider the following 308-residue polypeptide: tRNA pseudouridine synthase B (308 aa).

Asp44 (nucleophile) is an active-site residue.

This sequence belongs to the pseudouridine synthase TruB family. Type 1 subfamily.

It carries out the reaction uridine(55) in tRNA = pseudouridine(55) in tRNA. Functionally, responsible for synthesis of pseudouridine from uracil-55 in the psi GC loop of transfer RNAs. The protein is tRNA pseudouridine synthase B of Bdellovibrio bacteriovorus (strain ATCC 15356 / DSM 50701 / NCIMB 9529 / HD100).